We begin with the raw amino-acid sequence, 178 residues long: Acireductone dioxygenase (178 aa).

4 residues coordinate Fe(2+): H82, H84, E88, and H127. Ni(2+) is bound by residues H82, H84, E88, and H127. Phosphoserine is present on S157.

Belongs to the acireductone dioxygenase (ARD) family. Requires Fe(2+) as cofactor. It depends on Ni(2+) as a cofactor.

The protein localises to the cytoplasm. Its subcellular location is the nucleus. The enzyme catalyses 1,2-dihydroxy-5-(methylsulfanyl)pent-1-en-3-one + O2 = 4-methylsulfanyl-2-oxobutanoate + formate + 2 H(+). It catalyses the reaction 1,2-dihydroxy-5-(methylsulfanyl)pent-1-en-3-one + O2 = 3-(methylsulfanyl)propanoate + CO + formate + 2 H(+). Its pathway is amino-acid biosynthesis; L-methionine biosynthesis via salvage pathway; L-methionine from S-methyl-5-thio-alpha-D-ribose 1-phosphate: step 5/6. Its function is as follows. Catalyzes 2 different reactions between oxygen and the acireductone 1,2-dihydroxy-3-keto-5-methylthiopentene (DHK-MTPene) depending upon the metal bound in the active site. Fe-containing acireductone dioxygenase (Fe-ARD) produces formate and 2-keto-4-methylthiobutyrate (KMTB), the alpha-ketoacid precursor of methionine in the methionine recycle pathway. Ni-containing acireductone dioxygenase (Ni-ARD) produces methylthiopropionate, carbon monoxide and formate, and does not lie on the methionine recycle pathway. The protein is Acireductone dioxygenase (adi1) of Schizosaccharomyces pombe (strain 972 / ATCC 24843) (Fission yeast).